The following is a 166-amino-acid chain: NAD(P)H-quinone oxidoreductase subunit I, chloroplastic (166 aa).

4Fe-4S ferredoxin-type domains follow at residues 55–84 (GRIHFEFDKCIACEVCVRVCPIDLPVVDWK) and 95–124 (LNYSIDFGICIFCGNCVEYCPTNCLSMTEE). Positions 64, 67, 70, 74, 104, 107, 110, and 114 each coordinate [4Fe-4S] cluster.

Belongs to the complex I 23 kDa subunit family. As to quaternary structure, NDH is composed of at least 16 different subunits, 5 of which are encoded in the nucleus. The cofactor is [4Fe-4S] cluster.

Its subcellular location is the plastid. The protein localises to the chloroplast thylakoid membrane. It catalyses the reaction a plastoquinone + NADH + (n+1) H(+)(in) = a plastoquinol + NAD(+) + n H(+)(out). The enzyme catalyses a plastoquinone + NADPH + (n+1) H(+)(in) = a plastoquinol + NADP(+) + n H(+)(out). Its function is as follows. NDH shuttles electrons from NAD(P)H:plastoquinone, via FMN and iron-sulfur (Fe-S) centers, to quinones in the photosynthetic chain and possibly in a chloroplast respiratory chain. The immediate electron acceptor for the enzyme in this species is believed to be plastoquinone. Couples the redox reaction to proton translocation, and thus conserves the redox energy in a proton gradient. The chain is NAD(P)H-quinone oxidoreductase subunit I, chloroplastic from Raillardella argentea (Silky raillardella).